Here is a 304-residue protein sequence, read N- to C-terminus: Acetyl-coenzyme A carboxylase carboxyl transferase subunit beta (304 aa).

Residues 26-295 form the CoA carboxyltransferase N-terminal domain; that stretch reads VWTKCTSCEQ…PFVEPELVEN (270 aa). Residues C30, C33, C49, and C52 each contribute to the Zn(2+) site. The C4-type zinc-finger motif lies at 30–52; sequence CTSCEQVLYRDELRRHLEVCPKC. The tract at residues 281–304 is disordered; it reads SNKPSPFVEPELVENEEQSKSDNE.

It belongs to the AccD/PCCB family. In terms of assembly, acetyl-CoA carboxylase is a heterohexamer composed of biotin carboxyl carrier protein (AccB), biotin carboxylase (AccC) and two subunits each of ACCase subunit alpha (AccA) and ACCase subunit beta (AccD). The cofactor is Zn(2+).

The protein localises to the cytoplasm. It carries out the reaction N(6)-carboxybiotinyl-L-lysyl-[protein] + acetyl-CoA = N(6)-biotinyl-L-lysyl-[protein] + malonyl-CoA. The protein operates within lipid metabolism; malonyl-CoA biosynthesis; malonyl-CoA from acetyl-CoA: step 1/1. Component of the acetyl coenzyme A carboxylase (ACC) complex. Biotin carboxylase (BC) catalyzes the carboxylation of biotin on its carrier protein (BCCP) and then the CO(2) group is transferred by the transcarboxylase to acetyl-CoA to form malonyl-CoA. In Pasteurella multocida (strain Pm70), this protein is Acetyl-coenzyme A carboxylase carboxyl transferase subunit beta.